We begin with the raw amino-acid sequence, 497 residues long: Probable malate:quinone oxidoreductase (497 aa).

The protein belongs to the MQO family. It depends on FAD as a cofactor.

It catalyses the reaction (S)-malate + a quinone = a quinol + oxaloacetate. It participates in carbohydrate metabolism; tricarboxylic acid cycle; oxaloacetate from (S)-malate (quinone route): step 1/1. This Prochlorococcus marinus (strain MIT 9515) protein is Probable malate:quinone oxidoreductase.